A 209-amino-acid polypeptide reads, in one-letter code: Large ribosomal subunit protein uL3 (209 aa).

A disordered region spans residues 122–151 (AIKRHGQSRGPMSHGSRYHRRPGSMGPVDP).

It belongs to the universal ribosomal protein uL3 family. In terms of assembly, part of the 50S ribosomal subunit. Forms a cluster with proteins L14 and L19.

In terms of biological role, one of the primary rRNA binding proteins, it binds directly near the 3'-end of the 23S rRNA, where it nucleates assembly of the 50S subunit. The polypeptide is Large ribosomal subunit protein uL3 (Bacillus velezensis (strain DSM 23117 / BGSC 10A6 / LMG 26770 / FZB42) (Bacillus amyloliquefaciens subsp. plantarum)).